Here is a 692-residue protein sequence, read N- to C-terminus: Hexamerin-1.1 (692 aa).

A signal peptide spans 1–18 (MKLLILAVAISLAVLASG). A glycan (N-linked (GlcNAc...) asparagine) is linked at Asn-203.

It belongs to the hemocyanin family. In terms of assembly, homohexamer. Larval fat body.

It localises to the secreted. Its subcellular location is the extracellular space. Functionally, larval storage protein (LSP) which may serve as a store of amino acids for synthesis of adult proteins. This chain is Hexamerin-1.1 (HexA), found in Anopheles gambiae (African malaria mosquito).